The sequence spans 259 residues: UPF0246 protein PBPRA0561 (259 aa).

It belongs to the UPF0246 family.

The polypeptide is UPF0246 protein PBPRA0561 (Photobacterium profundum (strain SS9)).